The chain runs to 89 residues: Small ribosomal subunit protein uS15 (89 aa).

The protein belongs to the universal ribosomal protein uS15 family. Part of the 30S ribosomal subunit. Forms a bridge to the 50S subunit in the 70S ribosome, contacting the 23S rRNA.

In terms of biological role, one of the primary rRNA binding proteins, it binds directly to 16S rRNA where it helps nucleate assembly of the platform of the 30S subunit by binding and bridging several RNA helices of the 16S rRNA. Functionally, forms an intersubunit bridge (bridge B4) with the 23S rRNA of the 50S subunit in the ribosome. The polypeptide is Small ribosomal subunit protein uS15 (Nitrosomonas eutropha (strain DSM 101675 / C91 / Nm57)).